Consider the following 78-residue polypeptide: Exodeoxyribonuclease 7 small subunit (78 aa).

The protein belongs to the XseB family. As to quaternary structure, heterooligomer composed of large and small subunits.

Its subcellular location is the cytoplasm. The catalysed reaction is Exonucleolytic cleavage in either 5'- to 3'- or 3'- to 5'-direction to yield nucleoside 5'-phosphates.. Its function is as follows. Bidirectionally degrades single-stranded DNA into large acid-insoluble oligonucleotides, which are then degraded further into small acid-soluble oligonucleotides. In Nocardia farcinica (strain IFM 10152), this protein is Exodeoxyribonuclease 7 small subunit.